Reading from the N-terminus, the 616-residue chain is MALLQISEPGLSAAPHQRRLAAGIDLGTTNSLVATVRSGQAETLADHEGRHLLPSVVHYQQQGHSVGYDARTNAALDTANTISSVKRLMGRSLADIQQRYPHLPYQFQASENGLPMIETAAGLLNPVRVSADILKALAARATEALAGELDGVVITVPAYFDDAQRQGTKDAARLAGLHVLRLLNEPTAAAIAYGLDSGQEGVIAVYDLGGGTFDISILRLSRGVFEVLATGGDSALGGDDFDHLLADYIREQAGIPDRSDNRVQRELLDAAIAAKIALSDADSVTVNVAGWQGEISREQFNELIAPLVKRTLLACRRALKDAGVEADEVLEVVMVGGSTRVPLVRERVGEFFGRPPLTSIDPDKVVAIGAAIQADILVGNKPDSEMLLLDVIPLSLGLETMGGLVEKVIPRNTTIPVARAQDFTTFKDGQTAMSIHVMQGERELVQDCRSLARFALRGIPALPAGGAHIRVTFQVDADGLLSVTAMEKSTGVEASIQVKPSYGLTDSEIASMIKDSMSYAEQDVKARMLAEQKVEAARVLESLHGALAADAALLSAAERQVIDDAAAHLSEVAQGDDVDAIEQAIKNVDKQTQDFAARRMDQSVRRALKGHSVDEV.

Belongs to the heat shock protein 70 family.

Functionally, chaperone involved in the maturation of iron-sulfur cluster-containing proteins. Has a low intrinsic ATPase activity which is markedly stimulated by HscB. Involved in the maturation of IscU. This is Chaperone protein HscA from Escherichia coli O45:K1 (strain S88 / ExPEC).